A 428-amino-acid chain; its full sequence is tRNA modification GTPase MnmE (428 aa).

(6S)-5-formyl-5,6,7,8-tetrahydrofolate-binding residues include arginine 20, glutamate 76, and arginine 116. Positions 212–351 (GFEVAIVGAP…LVAAIGERLL (140 aa)) constitute a TrmE-type G domain. Asparagine 222 provides a ligand contact to K(+). GTP-binding positions include 222 to 227 (NAGKST), 241 to 247 (SEIAGTT), and 266 to 269 (DTAG). Serine 226 contributes to the Mg(2+) binding site. Residues serine 241, isoleucine 243, and threonine 246 each contribute to the K(+) site. Threonine 247 is a Mg(2+) binding site. Lysine 428 contributes to the (6S)-5-formyl-5,6,7,8-tetrahydrofolate binding site.

This sequence belongs to the TRAFAC class TrmE-Era-EngA-EngB-Septin-like GTPase superfamily. TrmE GTPase family. As to quaternary structure, homodimer. Heterotetramer of two MnmE and two MnmG subunits. It depends on K(+) as a cofactor.

It localises to the cytoplasm. Its function is as follows. Exhibits a very high intrinsic GTPase hydrolysis rate. Involved in the addition of a carboxymethylaminomethyl (cmnm) group at the wobble position (U34) of certain tRNAs, forming tRNA-cmnm(5)s(2)U34. This is tRNA modification GTPase MnmE from Cereibacter sphaeroides (strain ATCC 17029 / ATH 2.4.9) (Rhodobacter sphaeroides).